The sequence spans 466 residues: Purple acid phosphatase 25 (466 aa).

Positions 1–21 (MRMNKILLVFVFLSIATVINS) are cleaved as a signal peptide. Residue Asp164 coordinates Fe cation. An N-linked (GlcNAc...) asparagine glycan is attached at Asn172. Residues Asp192 and Tyr195 each coordinate Fe cation. A Zn(2+)-binding site is contributed by Asp192. 2 residues coordinate Zn(2+): Asn229 and His314. Asn229 contacts substrate. His324 (proton donor) is an active-site residue. His351 provides a ligand contact to Zn(2+). 351-353 (HVH) contributes to the substrate binding site. His353 is a Fe cation binding site. Asn367 and Asn424 each carry an N-linked (GlcNAc...) asparagine glycan.

This sequence belongs to the metallophosphoesterase superfamily. Purple acid phosphatase family. Homodimer. Requires Fe cation as cofactor. The cofactor is Zn(2+). As to expression, specifically expressed in flowers.

It is found in the secreted. The enzyme catalyses a phosphate monoester + H2O = an alcohol + phosphate. The sequence is that of Purple acid phosphatase 25 (PAP25) from Arabidopsis thaliana (Mouse-ear cress).